The sequence spans 526 residues: Thymocyte selection-associated high mobility group box protein TOX (526 aa).

2 disordered regions span residues 138–178 and 192–264; these read MPDI…PHGQ and GLNM…PQKP. Residues 192-203 show a composition bias toward polar residues; it reads GLNMGGSNVPHN. Positions 209 to 220 are enriched in low complexity; sequence GSKSATPSPSSS. The span at 228–245 shows a compositional bias: basic and acidic residues; the sequence is DTSKINGGEKRPASDMGK. Positions 237–256 match the Nuclear localization signal motif; it reads KRPASDMGKKPKTPKKKKKK. Residues 246–256 are compositionally biased toward basic residues; the sequence is KPKTPKKKKKK. A DNA-binding region (HMG box) is located at residues 261-329; that stretch reads PQKPVSAYAL…EYLKQLAAYR (69 aa).

The protein belongs to the high motility group (HMG) box superfamily. As to quaternary structure, interacts with HBO1 complex composed at least of KAT7/HBO1, ING4, MEAF6, and JADE2; this complex is involved in histone acetylation. Interacts with DNMT1, LEO1, PAF1, SAP130 and SIN3A; these interactors regulate chromatin remodeling. Interacts with an array of proteins involved in RNA processing and translation and DNA replication. As to expression, expressed in NK cells. Highly expressed in tumor-infiltrating CD8-positive T cells (at protein level).

Its subcellular location is the nucleus. Functionally, transcriptional regulator with a major role in neural stem cell commitment and corticogenesis as well as in lymphoid cell development and lymphoid tissue organogenesis. Binds to GC-rich DNA sequences in the proximity of transcription start sites and may alter chromatin structure, modifying access of transcription factors to DNA. During cortical development, controls the neural stem cell pool by inhibiting the switch from proliferative to differentiating progenitors. Beyond progenitor cells, promotes neurite outgrowth in newborn neurons migrating to reach the cortical plate. May activate or repress critical genes for neural stem cell fate such as SOX2, EOMES and ROBO2. Plays an essential role in the development of lymphoid tissue-inducer (LTi) cells, a subset necessary for the formation of secondary lymphoid organs: peripheral lymph nodes and Peyer's patches. Acts as a developmental checkpoint and regulates thymocyte positive selection toward T cell lineage commitment. Required for the development of various T cell subsets, including CD4-positive helper T cells, CD8-positive cytotoxic T cells, regulatory T cells and CD1D-dependent natural killer T (NKT) cells. Required for the differentiation of common lymphoid progenitors (CMP) to innate lymphoid cells (ILC). May regulate the NOTCH-mediated gene program, promoting differentiation of the ILC lineage. Required at the progenitor phase of NK cell development in the bone marrow to specify NK cell lineage commitment. Upon chronic antigen stimulation, diverts T cell development by promoting the generation of exhaustive T cells, while suppressing effector and memory T cell programming. May regulate the expression of genes encoding inhibitory receptors such as PDCD1 and induce the exhaustion program, to prevent the overstimulation of T cells and activation-induced cell death. This is Thymocyte selection-associated high mobility group box protein TOX from Homo sapiens (Human).